Consider the following 312-residue polypeptide: Nodulation protein D 2 (312 aa).

The 58-residue stretch at 6 to 63 (LDLNLLVALDALMTKRSVTAAARSINLSQPAMSAAIARLRTYFGDDLFTMRGRELIPT) folds into the HTH lysR-type domain. The segment at residues 23–42 (VTAAARSINLSQPAMSAAIA) is a DNA-binding region (H-T-H motif).

Belongs to the LysR transcriptional regulatory family.

Functionally, represses the expression of the nodABCIJ-nolO-noeI operon. The polypeptide is Nodulation protein D 2 (nodD2) (Sinorhizobium fredii (strain NBRC 101917 / NGR234)).